We begin with the raw amino-acid sequence, 337 residues long: GTP 3',8-cyclase (337 aa).

A Radical SAM core domain is found at 17-243; that stretch reads PFQRQYYYLR…HKSHTDGPAK (227 aa). Residue arginine 26 participates in GTP binding. Residues cysteine 33 and cysteine 37 each coordinate [4Fe-4S] cluster. Tyrosine 39 is an S-adenosyl-L-methionine binding site. Cysteine 40 serves as a coordination point for [4Fe-4S] cluster. Arginine 76 is a GTP binding site. Glycine 80 is a binding site for S-adenosyl-L-methionine. Residue threonine 107 participates in GTP binding. Position 131 (serine 131) interacts with S-adenosyl-L-methionine. Residue lysine 168 coordinates GTP. Methionine 202 is a binding site for S-adenosyl-L-methionine. [4Fe-4S] cluster contacts are provided by cysteine 265 and cysteine 268. 270-272 provides a ligand contact to GTP; it reads RLR. Position 282 (cysteine 282) interacts with [4Fe-4S] cluster.

It belongs to the radical SAM superfamily. MoaA family. Monomer and homodimer. [4Fe-4S] cluster serves as cofactor.

It carries out the reaction GTP + AH2 + S-adenosyl-L-methionine = (8S)-3',8-cyclo-7,8-dihydroguanosine 5'-triphosphate + 5'-deoxyadenosine + L-methionine + A + H(+). It participates in cofactor biosynthesis; molybdopterin biosynthesis. Its function is as follows. Catalyzes the cyclization of GTP to (8S)-3',8-cyclo-7,8-dihydroguanosine 5'-triphosphate. This chain is GTP 3',8-cyclase, found in Haemophilus influenzae (strain 86-028NP).